The primary structure comprises 395 residues: Flagellin A (395 aa).

Belongs to the bacterial flagellin family.

It localises to the secreted. It is found in the bacterial flagellum. Functionally, flagellin is the subunit protein which polymerizes to form the filaments of bacterial flagella. Homomer of FlaA is able to form a functional filament. This Rhizobium meliloti (Ensifer meliloti) protein is Flagellin A (flaA).